The sequence spans 561 residues: 7-keto 8-aminopelargonic acid transporter (561 aa).

Residues 1-49 (MNRVGAVFLFVYERNFFLSIVPDRHRTEIRMSSSERSEVKFDKHFNWWS) lie on the Cytoplasmic side of the membrane. Residues 50–70 (LLGIAFSLSCSWVGISASMAV) form a helical membrane-spanning segment. Topologically, residues 71–77 (GIASGGP) are extracellular. Residues 78–98 (LLIIYGLIIAAFFSLMCGISL) traverse the membrane as a helical segment. The Cytoplasmic portion of the chain corresponds to 99–160 (GDFAAILPNS…NVEVSSKFQK (62 aa)). Residues 161-181 (VSSMVVGLLNYFGAIFTTASI) traverse the membrane as a helical segment. The Extracellular portion of the chain corresponds to 182–204 (CSSLSMSCIGIHKLLHPDYELKH). The chain crosses the membrane as a helical span at residues 205 to 225 (WHVFVGYECINAVLTLFNIYS). Residues 226–230 (TPLPY) lie on the Cytoplasmic side of the membrane. Residues 231-251 (ISQFGLYTSLLSFAMTFIICI) traverse the membrane as a helical segment. At 252-281 (VSRSDNTVDPWPKASNIFGSFDNQTGWNSS) the chain is on the extracellular side. The chain crosses the membrane as a helical span at residues 282–302 (GMAFVVGLVNPIWAFVGIDSA). At 303 to 321 (THMIDEVGYSKSRFLVPKV) the chain is on the cytoplasmic side. The helical transmembrane segment at 322–342 (IITTIIVGFVTSFIYCVGLFF) threads the bilayer. Topologically, residues 343–369 (CITDQTAVVESILPIVEIFYQATGNRN) are extracellular. A helical membrane pass occupies residues 370-390 (LSVFLQCMCITTGFVSGIASG). At 391–439 (TWQSRILQSFGKSYAPFYKEGSLGNKSLKKLAVLTPGFKSPLYAHFLSQ) the chain is on the cytoplasmic side. A helical membrane pass occupies residues 440 to 460 (ICVTIIGCIFMGSSTAFNAII). A topological domain (extracellular) is located at residue Thr461. The chain crosses the membrane as a helical span at residues 462-482 (ACITLLLMSYAVPSFIFLFVI). Residues 483–507 (KKEKFIHRIESDVNCVSRPNRRRMS) lie on the Cytoplasmic side of the membrane. Residues 508–528 (MIPHIICILWTLFCLVFLSFP) form a helical membrane-spanning segment. Over 529 to 540 (YTLPVTAGNMNY) the chain is Extracellular. Residues 541 to 560 (TSVVYAVVFCIISIVVFPTC) form a helical membrane-spanning segment. Ile561 is a topological domain (cytoplasmic).

The protein belongs to the amino acid-polyamine-organocation (APC) superfamily.

The protein localises to the membrane. Its function is as follows. Transport into the cell of 7-keto 8-aminopelargonic acid. The protein is 7-keto 8-aminopelargonic acid transporter (BIO5) of Saccharomyces cerevisiae (strain ATCC 204508 / S288c) (Baker's yeast).